The sequence spans 374 residues: Chaperone protein DnaJ (374 aa).

Residues 4–68 enclose the J domain; that stretch reads DYYDILGVSR…QMRGRYDQFG (65 aa). The segment at 133-215 adopts a CR-type zinc-finger fold; it reads GGEQQIRISH…CGGRGQNQVS (83 aa). Residues C146, C149, C163, C166, C189, C192, C203, and C206 each coordinate Zn(2+). CXXCXGXG motif repeat units follow at residues 146–153, 163–170, 189–196, and 203–210; these read CKTCEGTG, CSTCQGSG, CPTCNGQG, and CDSCGGRG.

The protein belongs to the DnaJ family. As to quaternary structure, homodimer. The cofactor is Zn(2+).

The protein resides in the cytoplasm. Functionally, participates actively in the response to hyperosmotic and heat shock by preventing the aggregation of stress-denatured proteins and by disaggregating proteins, also in an autonomous, DnaK-independent fashion. Unfolded proteins bind initially to DnaJ; upon interaction with the DnaJ-bound protein, DnaK hydrolyzes its bound ATP, resulting in the formation of a stable complex. GrpE releases ADP from DnaK; ATP binding to DnaK triggers the release of the substrate protein, thus completing the reaction cycle. Several rounds of ATP-dependent interactions between DnaJ, DnaK and GrpE are required for fully efficient folding. Also involved, together with DnaK and GrpE, in the DNA replication of plasmids through activation of initiation proteins. The protein is Chaperone protein DnaJ of Acaryochloris marina (strain MBIC 11017).